Reading from the N-terminus, the 194-residue chain is NADH-quinone oxidoreductase subunit B (194 aa).

The interval 1-26 (MGLTPSATKPEIAQAPQGIVDPSTGR) is disordered. C73, C74, C138, and C168 together coordinate [4Fe-4S] cluster.

This sequence belongs to the complex I 20 kDa subunit family. In terms of assembly, NDH-1 is composed of 14 different subunits. Subunits NuoB, C, D, E, F, and G constitute the peripheral sector of the complex. The cofactor is [4Fe-4S] cluster.

It is found in the cell inner membrane. The catalysed reaction is a quinone + NADH + 5 H(+)(in) = a quinol + NAD(+) + 4 H(+)(out). NDH-1 shuttles electrons from NADH, via FMN and iron-sulfur (Fe-S) centers, to quinones in the respiratory chain. The immediate electron acceptor for the enzyme in this species is believed to be ubiquinone. Couples the redox reaction to proton translocation (for every two electrons transferred, four hydrogen ions are translocated across the cytoplasmic membrane), and thus conserves the redox energy in a proton gradient. The protein is NADH-quinone oxidoreductase subunit B of Xanthobacter autotrophicus (strain ATCC BAA-1158 / Py2).